We begin with the raw amino-acid sequence, 431 residues long: Enolase (431 aa).

Gln167 contacts (2R)-2-phosphoglycerate. The Proton donor role is filled by Glu209. Mg(2+)-binding residues include Asp246, Glu289, and Asp316. Residues Lys341, Arg370, Ser371, and Lys392 each contribute to the (2R)-2-phosphoglycerate site. Lys341 serves as the catalytic Proton acceptor.

Belongs to the enolase family. As to quaternary structure, component of the RNA degradosome, a multiprotein complex involved in RNA processing and mRNA degradation. Mg(2+) serves as cofactor.

Its subcellular location is the cytoplasm. The protein resides in the secreted. The protein localises to the cell surface. The catalysed reaction is (2R)-2-phosphoglycerate = phosphoenolpyruvate + H2O. Its pathway is carbohydrate degradation; glycolysis; pyruvate from D-glyceraldehyde 3-phosphate: step 4/5. Its function is as follows. Catalyzes the reversible conversion of 2-phosphoglycerate (2-PG) into phosphoenolpyruvate (PEP). It is essential for the degradation of carbohydrates via glycolysis. The sequence is that of Enolase from Hahella chejuensis (strain KCTC 2396).